We begin with the raw amino-acid sequence, 343 residues long: N-acetyl-gamma-glutamyl-phosphate reductase (343 aa).

Cys-147 is an active-site residue.

It belongs to the NAGSA dehydrogenase family. Type 1 subfamily.

It localises to the cytoplasm. The enzyme catalyses N-acetyl-L-glutamate 5-semialdehyde + phosphate + NADP(+) = N-acetyl-L-glutamyl 5-phosphate + NADPH + H(+). It participates in amino-acid biosynthesis; L-arginine biosynthesis; N(2)-acetyl-L-ornithine from L-glutamate: step 3/4. Catalyzes the NADPH-dependent reduction of N-acetyl-5-glutamyl phosphate to yield N-acetyl-L-glutamate 5-semialdehyde. The polypeptide is N-acetyl-gamma-glutamyl-phosphate reductase (Listeria welshimeri serovar 6b (strain ATCC 35897 / DSM 20650 / CCUG 15529 / CIP 8149 / NCTC 11857 / SLCC 5334 / V8)).